The following is a 176-amino-acid chain: uncharacterized protein (176 aa).

Residues 15 to 28 are compositionally biased toward polar residues; the sequence is TSSNPPASASQSTG. 2 disordered regions span residues 15 to 100 and 125 to 176; these read TSSN…TSAG and ASLR…NLGA. A compositionally biased stretch (basic and acidic residues) spans 43 to 52; that stretch reads FIDKVTDKPS.

This is an uncharacterized protein from Homo sapiens (Human).